The chain runs to 213 residues: Kynurenine formamidase (213 aa).

Residue Trp-20 coordinates substrate. Zn(2+)-binding residues include His-50, His-54, and Asp-56. His-60 acts as the Proton donor/acceptor in catalysis. The Zn(2+) site is built by His-161 and Glu-173.

This sequence belongs to the Cyclase 1 superfamily. KynB family. Homodimer. Zn(2+) serves as cofactor.

It catalyses the reaction N-formyl-L-kynurenine + H2O = L-kynurenine + formate + H(+). Its pathway is amino-acid degradation; L-tryptophan degradation via kynurenine pathway; L-kynurenine from L-tryptophan: step 2/2. Catalyzes the hydrolysis of N-formyl-L-kynurenine to L-kynurenine, the second step in the kynurenine pathway of tryptophan degradation. In Pseudomonas paraeruginosa (strain DSM 24068 / PA7) (Pseudomonas aeruginosa (strain PA7)), this protein is Kynurenine formamidase.